Consider the following 377-residue polypeptide: MQQRVIVGMSGGVDSSVSAALLLQQGYQVEGLFMKNWEEDDGTEYCTAMEDLADAQAVADKIGIKLHTANFAMEYWDRVFEHFLAEYAAGRTPNPDILCNKEIKFRAFLDHAMTLGADFIATGHYARRAETAYNSKGEAYAPLLRGLDNNKDQTYFLHAVHGREINKTLFPVGEIEKPEVRRIAEELDLATAKKKDSTGICFIGERRFNDFLKQYLPAQPGKIVLDNGKEVGEHHGLMYYTLGQRGGIGLGGMKGASEGAWFVLHKDVANNRLVVGQGHDHPLMQSTQLWSEAIDWVAGEQNIPAEGLRCTAKTRYRQPDQACTVFIDENSEHGVRVEFDEPQRAVTPGQSVVFYSDEVCLGGGVIHHTNAPTPNFI.

ATP-binding positions include 8–15 (GMSGGVDS) and methionine 34. Residues 94–96 (NPD) form an interaction with target base in tRNA region. Cysteine 99 functions as the Nucleophile in the catalytic mechanism. Cysteine 99 and cysteine 201 form a disulfide bridge. Glycine 123 is a binding site for ATP. Residues 151 to 153 (KDQ) form an interaction with tRNA region. The active-site Cysteine persulfide intermediate is the cysteine 201. The interaction with tRNA stretch occupies residues 315 to 316 (RY).

It belongs to the MnmA/TRMU family.

Its subcellular location is the cytoplasm. It catalyses the reaction S-sulfanyl-L-cysteinyl-[protein] + uridine(34) in tRNA + AH2 + ATP = 2-thiouridine(34) in tRNA + L-cysteinyl-[protein] + A + AMP + diphosphate + H(+). In terms of biological role, catalyzes the 2-thiolation of uridine at the wobble position (U34) of tRNA, leading to the formation of s(2)U34. The sequence is that of tRNA-specific 2-thiouridylase MnmA from Acinetobacter baumannii (strain AB307-0294).